We begin with the raw amino-acid sequence, 236 residues long: Phosphoribosylaminoimidazole-succinocarboxamide synthase (236 aa).

Belongs to the SAICAR synthetase family.

The enzyme catalyses 5-amino-1-(5-phospho-D-ribosyl)imidazole-4-carboxylate + L-aspartate + ATP = (2S)-2-[5-amino-1-(5-phospho-beta-D-ribosyl)imidazole-4-carboxamido]succinate + ADP + phosphate + 2 H(+). It functions in the pathway purine metabolism; IMP biosynthesis via de novo pathway; 5-amino-1-(5-phospho-D-ribosyl)imidazole-4-carboxamide from 5-amino-1-(5-phospho-D-ribosyl)imidazole-4-carboxylate: step 1/2. The chain is Phosphoribosylaminoimidazole-succinocarboxamide synthase from Pseudomonas syringae pv. tomato (strain ATCC BAA-871 / DC3000).